A 919-amino-acid chain; its full sequence is Synphilin-1 (919 aa).

Disordered regions lie at residues 80–99 (SPLK…DQKN), 108–140 (GGES…STSL), and 287–313 (SSAA…EERS). Residues 299 to 308 (SGLNRTSSQG) show a composition bias toward polar residues. ANK repeat units follow at residues 349-380 (NGNN…CLNE), 384-413 (EKLT…AIAE), 419-448 (DFPS…EQGI), and 456-485 (DGNS…NVTM). Residues 515–552 (CMSLASQVVKLTKQLKEQTVERVTLQNQLQQFLEAQKS) adopt a coiled-coil conformation. 3 disordered regions span residues 549-615 (AQKS…KDED), 666-713 (RLRQ…SMDS), and 728-919 (SGGR…NKAA). Positions 555-571 (KSLPSSPSSPSSPASRK) are enriched in low complexity. Residues 603–632 (ASSRARPKAKDEDSDKILRQLLGKEISENV) form an ANK 5 repeat. Over residues 667–685 (LRQLMQRSLSESDTDSNNS) the composition is skewed to low complexity. The segment covering 686–700 (EDPKTTPVRKADRPR) has biased composition (basic and acidic residues). Residues 699-729 (PRPQPIVESVESMDSAESLHLMIKKHTLASG) form an ANK 6 repeat. Over residues 774–785 (PSGDPQQPSPDS) the composition is skewed to low complexity. The span at 833–842 (NGEKDKDKGR) shows a compositional bias: basic and acidic residues. Residues 844–854 (LQRTSTSNESG) are compositionally biased toward polar residues. Low complexity predominate over residues 874–886 (NQNNNNNYQAANQ).

As to quaternary structure, homodimer. Heterodimer of isoform 1 and isoform 2. Interacts with SIAH1, SIAH2, SNCA, RNF19A and PRKN. Isoform 2 has a strong tendency to form aggregates and can sequester isoform 1. Ubiquitinated; mediated by SIAH1, SIAH2 or RNF19A and leading to its subsequent proteasomal degradation. In the absence of proteasomal degradation, ubiquitinated SNCAIP accumulates in cytoplasmic inclusion bodies. Isoform 2 is subject to limited ubiquitination that does not lead to proteasomal degradation. Detected in brain (at protein level). Widely expressed, with highest levels in brain, heart and placenta.

Its subcellular location is the cytoplasm. Functionally, isoform 2 inhibits the ubiquitin ligase activity of SIAH1 and inhibits proteasomal degradation of target proteins. Isoform 2 inhibits autoubiquitination and proteasomal degradation of SIAH1, and thereby increases cellular levels of SIAH. Isoform 2 modulates SNCA monoubiquitination by SIAH1. In Homo sapiens (Human), this protein is Synphilin-1 (SNCAIP).